A 269-amino-acid polypeptide reads, in one-letter code: Extracellular metalloprotease UREG_07765 (269 aa).

A signal peptide spans 1–18; the sequence is MRLSVSLLALAFGSLVAA. Residue Asn-179 is glycosylated (N-linked (GlcNAc...) asparagine). His-191 is a binding site for Zn(2+). Glu-192 is an active-site residue. A Zn(2+)-binding site is contributed by His-195. Residues 207 to 227 are disordered; sequence VSDTPPQRSSTQGCPSSRDSC. The segment covering 210–225 has biased composition (polar residues); it reads TPPQRSSTQGCPSSRD. The cysteines at positions 220 and 246 are disulfide-linked.

This sequence belongs to the peptidase M43B family.

The protein localises to the secreted. Its function is as follows. Secreted metalloproteinase that allows assimilation of proteinaceous substrates. This chain is Extracellular metalloprotease UREG_07765, found in Uncinocarpus reesii (strain UAMH 1704).